The following is a 344-amino-acid chain: Serine/arginine-rich splicing factor 6 (344 aa).

Residues 1–72 form the RRM 1 domain; the sequence is MPRVYIGRLS…ERVIVEHARG (72 aa). Phosphoserine is present on residues serine 45, serine 81, and serine 84. The tract at residues 75–103 is disordered; the sequence is RDRDGYSYGSRSGGGGYSSRRTSGRDKYG. The 74-residue stretch at 110 to 183 folds into the RRM 2 domain; the sequence is YRLIVENLSS…RNIRLIEDKP (74 aa). An N6-acetyllysine modification is found at lysine 165. Positions 176–344 are disordered; sequence IRLIEDKPRT…RSRSRSSSRD (169 aa). Lysine 182 is covalently cross-linked (Glycyl lysine isopeptide (Lys-Gly) (interchain with G-Cter in SUMO2)). Basic residues predominate over residues 185 to 250; the sequence is TSHRRSYSGS…RKSRSKSKSK (66 aa). 2 stretches are compositionally biased toward basic and acidic residues: residues 264–273 and 280–291; these read RSKDEYEKSR and SPKENGKGDIKS. Residues serine 297 and serine 299 each carry the phosphoserine modification. Position 303 is a phosphoserine; by DYRK1A (serine 303). Phosphoserine occurs at positions 314 and 316. A compositionally biased stretch (basic residues) spans 322–344; sequence ATSRSRSRSRSKSRSRSRSSSRD.

Belongs to the splicing factor SR family. In terms of assembly, binds SREK1/SFRS12. Interacts with DYRK1A. Extensively phosphorylated on serine residues in the RS domain. Phosphorylated by DYRK1A, probably in the RS domain. Phosphorylation by DYRK1A modulates alternative splice site selection and inhibits the expression of MAPT/Tau exon 10.

It is found in the nucleus. The protein resides in the nucleus speckle. In terms of biological role, plays a role in constitutive splicing and modulates the selection of alternative splice sites. Plays a role in the alternative splicing of MAPT/Tau exon 10. Binds to alternative exons of TNC pre-mRNA and promotes the expression of alternatively spliced TNC. Plays a role in wound healing and in the regulation of keratinocyte differentiation and proliferation via its role in alternative splicing. This Homo sapiens (Human) protein is Serine/arginine-rich splicing factor 6 (SRSF6).